A 305-amino-acid polypeptide reads, in one-letter code: Urease accessory protein UreD (305 aa).

Belongs to the UreD family. As to quaternary structure, ureD, UreF and UreG form a complex that acts as a GTP-hydrolysis-dependent molecular chaperone, activating the urease apoprotein by helping to assemble the nickel containing metallocenter of UreC. The UreE protein probably delivers the nickel.

Its subcellular location is the cytoplasm. Its function is as follows. Required for maturation of urease via the functional incorporation of the urease nickel metallocenter. The polypeptide is Urease accessory protein UreD (Delftia acidovorans (strain DSM 14801 / SPH-1)).